The primary structure comprises 363 residues: 3-dehydroquinate synthase (363 aa).

NAD(+) is bound by residues 75 to 80 (DAEEGK), 109 to 113 (GAVTD), 133 to 134 (TS), lysine 146, lysine 155, and 173 to 176 (TLDT). The Zn(2+) site is built by glutamate 188, histidine 251, and histidine 267.

This sequence belongs to the sugar phosphate cyclases superfamily. Dehydroquinate synthase family. Requires Co(2+) as cofactor. It depends on Zn(2+) as a cofactor. The cofactor is NAD(+).

It is found in the cytoplasm. The catalysed reaction is 7-phospho-2-dehydro-3-deoxy-D-arabino-heptonate = 3-dehydroquinate + phosphate. The protein operates within metabolic intermediate biosynthesis; chorismate biosynthesis; chorismate from D-erythrose 4-phosphate and phosphoenolpyruvate: step 2/7. Functionally, catalyzes the conversion of 3-deoxy-D-arabino-heptulosonate 7-phosphate (DAHP) to dehydroquinate (DHQ). The protein is 3-dehydroquinate synthase of Pseudarthrobacter chlorophenolicus (strain ATCC 700700 / DSM 12829 / CIP 107037 / JCM 12360 / KCTC 9906 / NCIMB 13794 / A6) (Arthrobacter chlorophenolicus).